The following is an 82-amino-acid chain: Small ribosomal subunit protein bS20 (82 aa).

Belongs to the bacterial ribosomal protein bS20 family.

Functionally, binds directly to 16S ribosomal RNA. This chain is Small ribosomal subunit protein bS20, found in Lysinibacillus sphaericus (strain C3-41).